We begin with the raw amino-acid sequence, 436 residues long: Chromosomal replication initiator protein DnaA (436 aa).

A domain I, interacts with DnaA modulators region spans residues 1–69 (MSIFTKIKKS…SELYEKETGI (69 aa)). Residues 69 to 97 (IKPKIDIVTKEISHRPLTIEEIIEPTTPS) are domain II. Residues 98–311 (VLIPEYTFES…GMITKINAMS (214 aa)) are domain III, AAA+ region. The ATP site is built by Gly142, Gly144, Lys145, and Thr146. The domain IV, binds dsDNA stretch occupies residues 312–436 (KILGISEITL…KNKIQIKKSE (125 aa)).

It belongs to the DnaA family. In terms of assembly, oligomerizes as a right-handed, spiral filament on DNA at oriC.

The protein resides in the cytoplasm. Functionally, plays an essential role in the initiation and regulation of chromosomal replication. ATP-DnaA binds to the origin of replication (oriC) to initiate formation of the DNA replication initiation complex once per cell cycle. Binds the DnaA box (a 9 base pair repeat at the origin) and separates the double-stranded (ds)DNA. Forms a right-handed helical filament on oriC DNA; dsDNA binds to the exterior of the filament while single-stranded (ss)DNA is stabiized in the filament's interior. The ATP-DnaA-oriC complex binds and stabilizes one strand of the AT-rich DNA unwinding element (DUE), permitting loading of DNA polymerase. After initiation quickly degrades to an ADP-DnaA complex that is not apt for DNA replication. Binds acidic phospholipids. This chain is Chromosomal replication initiator protein DnaA, found in Nautilia profundicola (strain ATCC BAA-1463 / DSM 18972 / AmH).